Consider the following 275-residue polypeptide: Elongation factor Ts (275 aa).

An involved in Mg(2+) ion dislocation from EF-Tu region spans residues 76–79; it reads TDFV.

Belongs to the EF-Ts family.

Its subcellular location is the cytoplasm. In terms of biological role, associates with the EF-Tu.GDP complex and induces the exchange of GDP to GTP. It remains bound to the aminoacyl-tRNA.EF-Tu.GTP complex up to the GTP hydrolysis stage on the ribosome. The chain is Elongation factor Ts from Corynebacterium glutamicum (strain ATCC 13032 / DSM 20300 / JCM 1318 / BCRC 11384 / CCUG 27702 / LMG 3730 / NBRC 12168 / NCIMB 10025 / NRRL B-2784 / 534).